The following is a 403-amino-acid chain: Formin-like protein 21b (403 aa).

The FH2 domain occupies 1–380 (MELLFTATLL…KAAKEAEMEK (380 aa)). The disordered stretch occupies residues 373 to 403 (AKEAEMEKTKKRVSLTNKKASGVGEEESCLI).

It belongs to the formin-like family. Class-II subfamily.

In Arabidopsis thaliana (Mouse-ear cress), this protein is Formin-like protein 21b (FH21B).